The primary structure comprises 645 residues: Cytoplasmic dynein 1 intermediate chain 1 (645 aa).

2 stretches are compositionally biased toward basic and acidic residues: residues 1–13 (MSDKSDLKAELER) and 20–58 (QIREEKKRKEEERKKKEADMQQKKEPVQDDSDLDRKRRE). 2 disordered regions span residues 1–58 (MSDK…KRRE) and 96–125 (MSPSSKSVSTPSEAGSQDSGDLGPLTRTLQ). Serine 2 is subject to N-acetylserine. Residues 2 to 123 (SDKSDLKAEL…SGDLGPLTRT (122 aa)) form an interaction with DCTN1 region. Phosphoserine occurs at positions 50 and 100. Low complexity predominate over residues 96-107 (MSPSSKSVSTPS). Phosphothreonine is present on threonine 105. Phosphoserine occurs at positions 107, 111, and 114. An interaction with DYNLT1 region spans residues 147–163 (KLGVSKVTQVDFLPREV). Residues 169–221 (ETQTPLATHQSEEDEEDEEMVESKVGQDSELENQDKKQEVKEAPPRELTEEEK) are disordered. Threonine 176 is subject to Phosphothreonine. Phosphoserine occurs at positions 179 and 197. Residues 189 to 221 (VESKVGQDSELENQDKKQEVKEAPPRELTEEEK) show a composition bias toward basic and acidic residues. WD repeat units follow at residues 285-334 (SKHR…TTPE), 338-378 (HCQS…RTPV), 387-428 (AHTH…TPQE), 437-477 (SKPV…AGIG), 482-527 (GHQG…PLYS), 530-570 (DNAD…EVPT), and 576-615 (EGASALNRVRWAQAGKEVAVGDSEGRIWVYDVGELAVPHN). Residue serine 635 is modified to Phosphoserine.

This sequence belongs to the dynein intermediate chain family. In terms of assembly, homodimer. The cytoplasmic dynein 1 complex consists of two catalytic heavy chains (HCs) and a number of non-catalytic subunits presented by intermediate chains (ICs), light intermediate chains (LICs) and light chains (LCs); the composition seems to vary in respect to the IC, LIC and LC composition. The heavy chain homodimer serves as a scaffold for the probable homodimeric assembly of the respective non-catalytic subunits. The ICs and LICs bind directly to the HC dimer and the LCs assemble on the IC dimer. Interacts with DYNC1H1. Interacts with DYNLT1 and DYNLT3. Interacts with DCTN1. Interacts with MCRS1; the interaction is required for the proper distribution of centriolar satellites.

It localises to the cytoplasm. It is found in the chromosome. Its subcellular location is the centromere. The protein resides in the kinetochore. The protein localises to the cytoskeleton. It localises to the spindle pole. In terms of biological role, acts as one of several non-catalytic accessory components of the cytoplasmic dynein 1 complex that are thought to be involved in linking dynein to cargos and to adapter proteins that regulate dynein function. Cytoplasmic dynein 1 acts as a motor for the intracellular retrograde motility of vesicles and organelles along microtubules. The intermediate chains mediate the binding of dynein to dynactin via its 150 kDa component (p150-glued) DCTN1. May play a role in mediating the interaction of cytoplasmic dynein with membranous organelles and kinetochores. The sequence is that of Cytoplasmic dynein 1 intermediate chain 1 (DYNC1I1) from Homo sapiens (Human).